A 686-amino-acid polypeptide reads, in one-letter code: Hexamerin 70c (686 aa).

The signal sequence occupies residues 1–19; that stretch reads MLSKVVLLVALAAICGAQG. A Hemocyanin N-terminal domain is found at 32–155; that stretch reads FLHKQKKIFD…IAVLYRPDTK (124 aa). The Hemocyanin middle domain occupies 161–431; sequence AIYEIYPNYF…MLYQNILSYF (271 aa). Residues asparagine 205 and asparagine 662 are each glycosylated (N-linked (GlcNAc...) asparagine). In terms of domain architecture, Hemocyanin C-terminal spans 440 to 676; that stretch reads QYSQSELQMP…NMYFKDVFIY (237 aa).

It belongs to the hemocyanin/hexamerin family. As to quaternary structure, probable homohexamer. Expressed in the fat body and secreted into the hemolymph (at protein level). Present in trophocytes and oenocytes of the fat body (at protein level). Not expressed in ovary or testis.

The protein localises to the secreted. Its subcellular location is the nucleus. It localises to the cytoplasm. The protein resides in the cytoplasmic granule. Storage protein that may function as a nutrient supply to compensate for lack of dietary proteins during metamorphosis and egg production. The chain is Hexamerin 70c from Apis mellifera (Honeybee).